A 408-amino-acid chain; its full sequence is MKFVDEVSIRVKAGDGGNGCMSFRREKFIENGGPNGGDGGDGGSVYMIADENLNTLVDYRYTRHHEAQRGSNGGSTDCTGKKGEDLFLRVPVGTTVIDASTQEVIGDLVTPGQKLMVAQGGWHGLGNTRFKSSTNRAPRQTTPGKPGEQRDLKMEMKVLADVGLLGLPNAGKSTFIRSVSAAKPKVADYPFTTLVPNLGVVSVDRWKSFVIADIPGLIEGASEGAGLGIRFLKHLARTRVLLHLVDIAPLDESSPADAAEVIVNELTRFSPSLAERERWLVLNKADMVMDDERDERVQEVIDRLEWEGPVYVISAISKQGTDKLSHDLMRYLEDRADRLANDPAYAEELADLDQRIEDEARAQLQALDDARTLRRTGVKSVHDIGDDDGWDDDFEDDEDGPEIIYVRD.

In terms of domain architecture, Obg spans 1–159; that stretch reads MKFVDEVSIR…RDLKMEMKVL (159 aa). Residues 127 to 148 are disordered; the sequence is NTRFKSSTNRAPRQTTPGKPGE. Polar residues predominate over residues 129–143; that stretch reads RFKSSTNRAPRQTTP. The 174-residue stretch at 160-333 folds into the OBG-type G domain; sequence ADVGLLGLPN…LSHDLMRYLE (174 aa). GTP contacts are provided by residues 166-173, 191-195, 213-216, 283-286, and 314-316; these read GLPNAGKS, FTTLV, DIPG, NKAD, and SAI. Mg(2+)-binding residues include serine 173 and threonine 193. The segment covering 385 to 401 has biased composition (acidic residues); the sequence is GDDDGWDDDFEDDEDGP. A disordered region spans residues 385-408; sequence GDDDGWDDDFEDDEDGPEIIYVRD.

The protein belongs to the TRAFAC class OBG-HflX-like GTPase superfamily. OBG GTPase family. As to quaternary structure, monomer. Mg(2+) serves as cofactor.

The protein localises to the cytoplasm. Its function is as follows. An essential GTPase which binds GTP, GDP and possibly (p)ppGpp with moderate affinity, with high nucleotide exchange rates and a fairly low GTP hydrolysis rate. Plays a role in control of the cell cycle, stress response, ribosome biogenesis and in those bacteria that undergo differentiation, in morphogenesis control. This is GTPase Obg from Pseudomonas putida (strain ATCC 700007 / DSM 6899 / JCM 31910 / BCRC 17059 / LMG 24140 / F1).